Reading from the N-terminus, the 237-residue chain is LexA repressor (237 aa).

A DNA-binding region (H-T-H motif) is located at residues 26 to 46; it reads FDEMKIALELTSKSGIHRLIT. Catalysis depends on for autocatalytic cleavage activity residues Ser-158 and Lys-196.

Belongs to the peptidase S24 family. In terms of assembly, homodimer.

It catalyses the reaction Hydrolysis of Ala-|-Gly bond in repressor LexA.. Represses a number of genes involved in the response to DNA damage (SOS response), including recA and lexA. In the presence of single-stranded DNA, RecA interacts with LexA causing an autocatalytic cleavage which disrupts the DNA-binding part of LexA, leading to derepression of the SOS regulon and eventually DNA repair. This chain is LexA repressor, found in Bartonella quintana (strain Toulouse) (Rochalimaea quintana).